The primary structure comprises 538 residues: Beta-1,4-mannosyl-glycoprotein 4-beta-N-acetylglucosaminyltransferase (538 aa).

The Cytoplasmic portion of the chain corresponds to 1–7; that stretch reads MKMRRYK. Residues 8 to 23 traverse the membrane as a helical; Signal-anchor for type II membrane protein segment; sequence LFLMFCMAGLCLISFL. The Lumenal segment spans residues 24-538; the sequence is HFFKTLSYVT…VRGKLDTTEG (515 aa). The disordered stretch occupies residues 121–151; the sequence is GTRMLEKPSPGRTEEKTKVAEGSSVRGPARR. Residues N245, N263, and N401 are each glycosylated (N-linked (GlcNAc...) asparagine). Residues 509 to 538 form a disordered region; that stretch reads PKSTVEGGRRNQGSDGRSSAVRGKLDTTEG.

This sequence belongs to the glycosyltransferase 17 family. In terms of assembly, interacts with MGAT4D.

It localises to the golgi apparatus membrane. The catalysed reaction is N(4)-{beta-D-GlcNAc-(1-&gt;2)-alpha-D-Man-(1-&gt;3)-[beta-D-GlcNAc-(1-&gt;2)-alpha-D-Man-(1-&gt;6)]-beta-D-Man-(1-&gt;4)-beta-D-GlcNAc-(1-&gt;4)-beta-D-GlcNAc}-L-asparaginyl-[protein] + UDP-N-acetyl-alpha-D-glucosamine = N(4)-{beta-D-GlcNAc-(1-&gt;2)-alpha-D-Man-(1-&gt;3)-[beta-D-GlcNAc-(1-&gt;4)]-[beta-D-GlcNAc-(1-&gt;2)-alpha-D-Man-(1-&gt;6)]-beta-D-Man-(1-&gt;4)-beta-D-GlcNAc-(1-&gt;4)-beta-D-GlcNAc}-L-asparaginyl-[protein] + UDP + H(+). It functions in the pathway protein modification; protein glycosylation. It is involved in the regulation of the biosynthesis and biological function of glycoprotein oligosaccharides. Catalyzes the addition of N-acetylglucosamine in beta 1-4 linkage to the beta-linked mannose of the trimannosyl core of N-linked sugar chains, called bisecting N-acetylglucosamine (GlcNAc). It is one of the most important enzymes involved in the regulation of the biosynthesis of glycoprotein oligosaccharides. The addition of this bisecting GlcNAc residue alters not only the composition, but also the conformation of the N-glycan. The introduction of the bisecting GlcNAc residue results in the suppression of further processing and elongation of N-glycans, precluding the formation of beta-1,6 GlcNAc branching, catalyzed by MGAT5 since it is unable to use the bisected oligosaccharide as a substrate. Addition of bisecting N-acetylglucosamine to CDH1/E-cadherin modulates CDH1 cell membrane location. Inhibits NeuAc-alpha-2,3-Gal-beta-1,4-GlcNAc- formation which modulates sialylation levels and plays a role in cell migration regulation. In brain, addition of bisecting N-acetylglucosamine to BACE1 blocks its lysosomal targeting in response to oxidative stress and further degradation which increases its location to early endosome and the APP cleavage. In Rattus norvegicus (Rat), this protein is Beta-1,4-mannosyl-glycoprotein 4-beta-N-acetylglucosaminyltransferase (Mgat3).